A 160-amino-acid polypeptide reads, in one-letter code: Ribosomal RNA large subunit methyltransferase H (160 aa).

Leu76 and Gly108 together coordinate S-adenosyl-L-methionine.

Belongs to the RNA methyltransferase RlmH family. As to quaternary structure, homodimer.

The protein resides in the cytoplasm. It carries out the reaction pseudouridine(1915) in 23S rRNA + S-adenosyl-L-methionine = N(3)-methylpseudouridine(1915) in 23S rRNA + S-adenosyl-L-homocysteine + H(+). Specifically methylates the pseudouridine at position 1915 (m3Psi1915) in 23S rRNA. This Bradyrhizobium sp. (strain BTAi1 / ATCC BAA-1182) protein is Ribosomal RNA large subunit methyltransferase H.